The sequence spans 153 residues: Large ribosomal subunit protein bL9 (153 aa).

It belongs to the bacterial ribosomal protein bL9 family.

Binds to the 23S rRNA. This Koribacter versatilis (strain Ellin345) protein is Large ribosomal subunit protein bL9.